The primary structure comprises 304 residues: uncharacterized protein (304 aa).

Residues 1–22 (MKKSLTLLILLLCSLLFSTVLS) form the signal peptide. The segment at 91–111 (PAPAPTPESSDPDEPMKPDDS) is disordered. 4 N-linked (GlcNAc...) asparagine glycosylation sites follow: N133, N160, N183, and N233. S282 carries the GPI-anchor amidated serine lipid modification. The propeptide at 283-304 (SSHLFGVLPFLPLVLCIFLFLL) is removed in mature form.

It localises to the cell membrane. This is an uncharacterized protein from Arabidopsis thaliana (Mouse-ear cress).